Here is a 384-residue protein sequence, read N- to C-terminus: Alanine racemase (384 aa).

K39 acts as the Proton acceptor; specific for D-alanine in catalysis. Position 39 is an N6-(pyridoxal phosphate)lysine (K39). Position 136 (R136) interacts with substrate. The active-site Proton acceptor; specific for L-alanine is the Y265. M312 serves as a coordination point for substrate.

It belongs to the alanine racemase family. The cofactor is pyridoxal 5'-phosphate.

It catalyses the reaction L-alanine = D-alanine. It participates in amino-acid biosynthesis; D-alanine biosynthesis; D-alanine from L-alanine: step 1/1. Functionally, catalyzes the interconversion of L-alanine and D-alanine. May also act on other amino acids. The polypeptide is Alanine racemase (alr) (Geobacillus kaustophilus (strain HTA426)).